We begin with the raw amino-acid sequence, 67 residues long: Ceratotoxin-C (67 aa).

Positions 1–23 (MANIKAVFLICIVAFIAFHCVVA) are cleaved as a signal peptide. Positions 24-35 (EPTAEDSVVVKR) are excised as a propeptide.

Homomer of four to six subunits.

Its subcellular location is the secreted. Female-specific peptides with potent activity against Gram-positive and Gram-negative bacteria. They have as well hemolytic activity. The polypeptide is Ceratotoxin-C (CTXC1) (Ceratitis capitata (Mediterranean fruit fly)).